A 545-amino-acid polypeptide reads, in one-letter code: CTP synthase (545 aa).

Positions 1-266 (MTTNYIFVTG…DDYICKRFSL (266 aa)) are amidoligase domain. Position 14 (Ser-14) interacts with CTP. Position 14 (Ser-14) interacts with UTP. Residues 15–20 (SLGKGI) and Asp-72 contribute to the ATP site. Positions 72 and 140 each coordinate Mg(2+). Residues 147 to 149 (DIE), 187 to 192 (KTKPTQ), and Lys-223 contribute to the CTP site. Residues 187–192 (KTKPTQ) and Lys-223 each bind UTP. 239 to 241 (KDV) provides a ligand contact to ATP. The 252-residue stretch at 291–542 (TIGMVGKYIE…VKAASEYQKR (252 aa)) folds into the Glutamine amidotransferase type-1 domain. Gly-352 provides a ligand contact to L-glutamine. Cys-379 serves as the catalytic Nucleophile; for glutamine hydrolysis. Residues 380–383 (LGMQ), Glu-403, and Arg-470 contribute to the L-glutamine site. Catalysis depends on residues His-515 and Glu-517.

This sequence belongs to the CTP synthase family. Homotetramer.

The enzyme catalyses UTP + L-glutamine + ATP + H2O = CTP + L-glutamate + ADP + phosphate + 2 H(+). It catalyses the reaction L-glutamine + H2O = L-glutamate + NH4(+). It carries out the reaction UTP + NH4(+) + ATP = CTP + ADP + phosphate + 2 H(+). The protein operates within pyrimidine metabolism; CTP biosynthesis via de novo pathway; CTP from UDP: step 2/2. With respect to regulation, allosterically activated by GTP, when glutamine is the substrate; GTP has no effect on the reaction when ammonia is the substrate. The allosteric effector GTP functions by stabilizing the protein conformation that binds the tetrahedral intermediate(s) formed during glutamine hydrolysis. Inhibited by the product CTP, via allosteric rather than competitive inhibition. Functionally, catalyzes the ATP-dependent amination of UTP to CTP with either L-glutamine or ammonia as the source of nitrogen. Regulates intracellular CTP levels through interactions with the four ribonucleotide triphosphates. This chain is CTP synthase, found in Klebsiella pneumoniae (strain 342).